We begin with the raw amino-acid sequence, 333 residues long: Glycogenin-1 (333 aa).

Position 2 is an N-acetylthreonine (Thr2). The UDP site is built by Leu9, Thr11, Asn12, and Tyr15. 4 residues coordinate UDP-alpha-D-glucose: Leu9, Thr11, Asn12, and Tyr15. Ser44 is subject to Phosphoserine; by PKA; in vitro. Residue Arg77 coordinates UDP. Positions 77, 86, 102, 103, 104, 133, 134, 160, 163, and 164 each coordinate UDP-alpha-D-glucose. The UDP site is built by Asp102, Ala103, and Asp104. A Mn(2+)-binding site is contributed by Asp102. Asp104 contributes to the Mn(2+) binding site. Tyr195 is a glycosylation site (O-linked (Glc...) tyrosine). 3 residues coordinate UDP: His212, Gly215, and Lys218. Mn(2+) is bound at residue His212. Residues Gly215 and Lys218 each contribute to the UDP-alpha-D-glucose site. The interaction with GYS1 stretch occupies residues 284–316 (SHLSLGETPATTQPFVSSEERKERWEQGQADYM).

The protein belongs to the glycosyltransferase 8 family. Glycogenin subfamily. Part of the GYS1-GYG1 complex, a heterooctamer composed of a tetramer of GYS1 and 2 dimers of GYG1, where each GYS1 protomer binds to one GYG1 subunit (via GYG1 C-terminus); the GYS1 tetramer may dissociate from GYG1 dimers to continue glycogen polymerization on its own. May also form a heterooctamer complex with GYS2 (via GYG1 C-terminus). Mn(2+) serves as cofactor. Post-translationally, self-glycosylated by the transfer of glucose residues from UDP-glucose to itself, forming an alpha-1,4-glycan of around 10 residues attached to Tyr-195. Phosphorylated. As to expression, detected in heart, skeletal muscle, brain and testis, and at lower levels in kidney.

It localises to the cytoplasm. It is found in the nucleus. The catalysed reaction is L-tyrosyl-[glycogenin] + UDP-alpha-D-glucose = alpha-D-glucosyl-L-tyrosyl-[glycogenin] + UDP + H(+). It carries out the reaction [1,4-alpha-D-glucosyl](n)-L-tyrosyl-[glycogenin] + UDP-alpha-D-glucose = [1,4-alpha-D-glucosyl](n+1)-L-tyrosyl-[glycogenin] + UDP + H(+). Its pathway is glycan biosynthesis; glycogen biosynthesis. Functionally, glycogenin participates in the glycogen biosynthetic process along with glycogen synthase and glycogen branching enzyme. It catalyzes the formation of a short alpha (1,4)-glucosyl chain covalently attached via a glucose 1-O-tyrosyl linkage to internal tyrosine residues and these chains act as primers for the elongation reaction catalyzed by glycogen synthase. The protein is Glycogenin-1 (GYG1) of Oryctolagus cuniculus (Rabbit).